Here is a 60-residue protein sequence, read N- to C-terminus: Antitoxin Dmd (60 aa).

In terms of assembly, can form a complex with non-cognate host toxins LsoA and RnlA.

In terms of biological role, antitoxin component of a potential type II toxin-antitoxin (TA) system. Acts as an antitoxin against host toxins RnlA and LsoA, preventing them from degrading T4 bacteriophage-derived mRNA and thus permitting successful virus infection. Stabilizes middle (8-10 minutes) and late (18 to 28 minutes) T4 gene transcripts. The sequence is that of Antitoxin Dmd (dmd) from Escherichia coli (Bacteriophage T4).